We begin with the raw amino-acid sequence, 352 residues long: Protein RecA (352 aa).

Residue 64 to 71 (GPESSGKT) coordinates ATP. The segment at 328 to 352 (NPSSVPEAEAEHDPEQDEEPTFDLE) is disordered. The segment covering 335 to 352 (AEAEHDPEQDEEPTFDLE) has biased composition (acidic residues).

It belongs to the RecA family.

It is found in the cytoplasm. Can catalyze the hydrolysis of ATP in the presence of single-stranded DNA, the ATP-dependent uptake of single-stranded DNA by duplex DNA, and the ATP-dependent hybridization of homologous single-stranded DNAs. It interacts with LexA causing its activation and leading to its autocatalytic cleavage. The polypeptide is Protein RecA (Brevibacillus brevis (strain 47 / JCM 6285 / NBRC 100599)).